The following is a 485-amino-acid chain: DNA polymerase subunit gamma-2 (485 aa).

A disordered region spans residues 28–67; that stretch reads RQPEQLSKGTGSFVGPVRSQAELPRNEPREAPESGGEGSE.

As to quaternary structure, heterotrimer composed of a catalytic subunit and a homodimer of accessory subunits (POLG:POLG2).

It localises to the mitochondrion. The protein resides in the mitochondrion matrix. It is found in the mitochondrion nucleoid. Accessory subunit of DNA polymerase gamma solely responsible for replication of mitochondrial DNA (mtDNA). Acts as an allosteric regulator of the holoenzyme activities. Enhances the polymerase activity and the processivity of POLG by increasing its interactions with the DNA template. Suppresses POLG exonucleolytic proofreading especially toward homopolymeric templates bearing mismatched termini. Binds to single-stranded DNA. The polypeptide is DNA polymerase subunit gamma-2 (POLG2) (Bos taurus (Bovine)).